A 761-amino-acid chain; its full sequence is Mitochondrial intermediate peptidase (761 aa).

Residues 1–37 (MLIQKILLNKEISRLPRILSILNYTGLRWLSGSSGRN) constitute a mitochondrion transit peptide. Residue His547 coordinates Zn(2+). Glu548 is an active-site residue. 2 residues coordinate Zn(2+): His551 and His554.

This sequence belongs to the peptidase M3 family. The cofactor is Zn(2+).

The protein resides in the mitochondrion matrix. It carries out the reaction Release of an N-terminal octapeptide as second stage of processing of some proteins imported into the mitochondrion.. Its function is as follows. Cleaves proteins, imported into the mitochondrion, to their mature size. While most mitochondrial precursor proteins are processed to the mature form in one step by mitochondrial processing peptidase (MPP), the sequential cleavage by MIP of an octapeptide after initial processing by MPP is a required step for a subgroup of nuclear-encoded precursor proteins destined for the matrix or the inner membrane. The chain is Mitochondrial intermediate peptidase (OCT1) from Candida glabrata (strain ATCC 2001 / BCRC 20586 / JCM 3761 / NBRC 0622 / NRRL Y-65 / CBS 138) (Yeast).